The primary structure comprises 96 residues: Small ribosomal subunit protein bS6 (96 aa).

The protein belongs to the bacterial ribosomal protein bS6 family.

In terms of biological role, binds together with bS18 to 16S ribosomal RNA. This is Small ribosomal subunit protein bS6 from Streptococcus pneumoniae serotype 19F (strain G54).